The following is a 274-amino-acid chain: Triosephosphate isomerase (274 aa).

Position 13–15 (13–15) interacts with substrate; that stretch reads NWK. His98 acts as the Electrophile in catalysis. Glu170 functions as the Proton acceptor in the catalytic mechanism. Residues Gly176 and Ser216 each contribute to the substrate site.

It belongs to the triosephosphate isomerase family. As to quaternary structure, homodimer.

The protein resides in the cytoplasm. It catalyses the reaction D-glyceraldehyde 3-phosphate = dihydroxyacetone phosphate. It participates in carbohydrate biosynthesis; gluconeogenesis. Its pathway is carbohydrate degradation; glycolysis; D-glyceraldehyde 3-phosphate from glycerone phosphate: step 1/1. Functionally, involved in the gluconeogenesis. Catalyzes stereospecifically the conversion of dihydroxyacetone phosphate (DHAP) to D-glyceraldehyde-3-phosphate (G3P). The sequence is that of Triosephosphate isomerase from Aster yellows witches'-broom phytoplasma (strain AYWB).